A 464-amino-acid chain; its full sequence is 3-isopropylmalate dehydratase large subunit (464 aa).

C337, C397, and C400 together coordinate [4Fe-4S] cluster.

Belongs to the aconitase/IPM isomerase family. LeuC type 1 subfamily. Heterodimer of LeuC and LeuD. [4Fe-4S] cluster serves as cofactor.

It catalyses the reaction (2R,3S)-3-isopropylmalate = (2S)-2-isopropylmalate. The protein operates within amino-acid biosynthesis; L-leucine biosynthesis; L-leucine from 3-methyl-2-oxobutanoate: step 2/4. Catalyzes the isomerization between 2-isopropylmalate and 3-isopropylmalate, via the formation of 2-isopropylmaleate. This Bacillus cereus (strain ATCC 10987 / NRS 248) protein is 3-isopropylmalate dehydratase large subunit.